A 521-amino-acid polypeptide reads, in one-letter code: C-22 sterol desaturase erg5 (521 aa).

The chain crosses the membrane as a helical span at residues 30–50 (AVLNGFTFWKALATLFFAAVI).

Belongs to the cytochrome P450 family. Heme is required as a cofactor.

It is found in the endoplasmic reticulum membrane. It catalyses the reaction 5-dehydroepisterol + NADPH + O2 + H(+) = ergosta-5,7,22,24(28)-tetraen-3beta-ol + NADP(+) + 2 H2O. It participates in steroid metabolism; ergosterol biosynthesis. C-22 sterol desaturase; part of the third module of ergosterol biosynthesis pathway that includes the late steps of the pathway. Erg5 converts 5-dehydroepisterol into ergosta-5,7,22,24(28)-tetraen-3beta-ol by forming the C-22(23) double bond in the sterol side chain. The third module or late pathway involves the ergosterol synthesis itself through consecutive reactions that mainly occur in the endoplasmic reticulum (ER) membrane. Firstly, the squalene synthase erg9 catalyzes the condensation of 2 farnesyl pyrophosphate moieties to form squalene, which is the precursor of all steroids. Squalene synthase is crucial for balancing the incorporation of farnesyl diphosphate (FPP) into sterol and nonsterol isoprene synthesis. Secondly, squalene is converted into lanosterol by the consecutive action of the squalene epoxidase erg1 and the lanosterol synthase erg7. Then, the delta(24)-sterol C-methyltransferase erg6 methylates lanosterol at C-24 to produce eburicol. Eburicol is the substrate of the sterol 14-alpha demethylase encoded by cyp51A and cyp51B, to yield 4,4,24-trimethyl ergosta-8,14,24(28)-trienol. The C-14 reductase erg24 then reduces the C14=C15 double bond which leads to 4,4-dimethylfecosterol. A sequence of further demethylations at C-4, involving the C-4 demethylation complex containing the C-4 methylsterol oxidases erg25A or erg25B, the sterol-4-alpha-carboxylate 3-dehydrogenase erg26 and the 3-keto-steroid reductase erg27, leads to the production of fecosterol via 4-methylfecosterol. The C-8 sterol isomerase erg2 then catalyzes the reaction which results in unsaturation at C-7 in the B ring of sterols and thus converts fecosterol to episterol. The sterol-C5-desaturase erg3B then catalyzes the introduction of a C-5 double bond in the B ring to produce 5-dehydroepisterol. The 2 other sterol-C5-desaturases, erg3A and erg3C, seem to be less important in ergosterol biosynthesis. The C-22 sterol desaturase erg5 further converts 5-dehydroepisterol into ergosta-5,7,22,24(28)-tetraen-3beta-ol by forming the C-22(23) double bond in the sterol side chain. Finally, ergosta-5,7,22,24(28)-tetraen-3beta-ol is substrate of the C-24(28) sterol reductases erg4A and erg4B to produce ergosterol. Possible alternative sterol biosynthetic pathways might exist from fecosterol to ergosterol, depending on the activities of the erg3 isoforms. The polypeptide is C-22 sterol desaturase erg5 (Aspergillus fumigatus (strain ATCC MYA-4609 / CBS 101355 / FGSC A1100 / Af293) (Neosartorya fumigata)).